A 275-amino-acid polypeptide reads, in one-letter code: Tryptophan synthase alpha chain (275 aa).

Catalysis depends on proton acceptor residues E58 and D69.

Belongs to the TrpA family. As to quaternary structure, tetramer of two alpha and two beta chains. Ubiquitously expressed at low levels in seedlings, roots, hypocotyls, cotyledons, stems, leaves, inflorescences, flowers, siliques and seeds.

Its subcellular location is the cytoplasm. It carries out the reaction (1S,2R)-1-C-(indol-3-yl)glycerol 3-phosphate + L-serine = D-glyceraldehyde 3-phosphate + L-tryptophan + H2O. It catalyses the reaction (1S,2R)-1-C-(indol-3-yl)glycerol 3-phosphate = indole + D-glyceraldehyde 3-phosphate. It functions in the pathway amino-acid biosynthesis; L-tryptophan biosynthesis; L-tryptophan from chorismate: step 5/5. Its function is as follows. The alpha subunit is responsible for the aldol cleavage of indoleglycerol phosphate to indole and glyceraldehyde 3-phosphate. Contributes to the tryptophan-independent indole biosynthesis, and possibly to auxin production. This is Tryptophan synthase alpha chain (TRPA1) from Arabidopsis thaliana (Mouse-ear cress).